The sequence spans 568 residues: MWLTWMEYALVLLLMTALAVPMGQWLARCFTSEHHAWIERLSFRALGVNPAERMGWQRYGLALLLSNGAMLLLGYALLRAQGWLPLNALGNAAQTPDLAFNTAASFVTNTNWQAYSGESSLSNATQMVAITFMMFAGAITGVVAAAGFIRGLARSSASDLGNYWVDYVRVLWRVMLPLSFVVALVYVWQGVPQALDGQVWATTLEGARQQILLGPVASLESIKHIGTNGGGFFGMNAAHPFENPTPLTNAIHILGMLLIPSAMTYAFGSMLLRRRQGWVLFGACLVMFVGFLALVFTAEQAGNPLLTAAGADQQISATQPGGNMEGKELRFGIADTALFVATTTAATTGSVNAMHDSLTPLGGLVPLAQMMINCVFGGDGVGLINLLQYAILTVFLAGMMIGRTPEFLGKKIEAREIKLVMLAVMAHPISVLGFTALAAVWPDTLASLANRGPHGFSEVLYAYASGTANNGSAFAGLNANTPFFNTTIGLAMLAGRYLTLLPMLALAGSLAAKPTVPAGPGTFPTATPLFMGLLVFVVVVVGGLTFLPSLALGPVVEQLQMLSGQVYP.

10 consecutive transmembrane segments (helical) span residues 1–21, 60–80, 129–149, 174–194, 251–271, 278–298, 381–401, 420–440, 488–508, and 528–548; these read MWLT…LAVP, GLAL…LLRA, AITF…AGFI, VMLP…VPQA, IHIL…GSML, WVLF…VFTA, VGLI…GMMI, VMLA…LAAV, IGLA…ALAG, and PLFM…TFLP.

This sequence belongs to the KdpA family. The system is composed of three essential subunits: KdpA, KdpB and KdpC.

The protein resides in the cell inner membrane. Part of the high-affinity ATP-driven potassium transport (or Kdp) system, which catalyzes the hydrolysis of ATP coupled with the electrogenic transport of potassium into the cytoplasm. This subunit binds the periplasmic potassium ions and delivers the ions to the membrane domain of KdpB through an intramembrane tunnel. This is Potassium-transporting ATPase potassium-binding subunit from Delftia acidovorans (strain DSM 14801 / SPH-1).